Here is an 86-residue protein sequence, read N- to C-terminus: Large ribosomal subunit protein bL27 (86 aa).

Residues 1 to 24 (MAHKKAMGSTENTRDSNPSYLGVK) are disordered. The segment covering 9–19 (STENTRDSNPS) has biased composition (polar residues).

This sequence belongs to the bacterial ribosomal protein bL27 family.

This Salinibacter ruber (strain DSM 13855 / M31) protein is Large ribosomal subunit protein bL27.